Consider the following 698-residue polypeptide: Probable xyloglucan glycosyltransferase 2 (698 aa).

Transmembrane regions (helical) follow at residues 124–144 and 190–210; these read GFLA…WNGW and ILLF…CFWI. Asp272 is an active-site residue. Residues Asp331 and Asp333 each coordinate substrate. Residue Asp425 is part of the active site. Transmembrane regions (helical) follow at residues 503–523, 528–548, 653–668, and 673–693; these read LILP…TMFV, LPVW…ILPS, LALS…RSLL, and IHFY…LDLI.

Belongs to the glycosyltransferase 2 family. Plant cellulose synthase-like C subfamily.

The protein localises to the golgi apparatus membrane. Its function is as follows. Probable beta-1,4-glucan synthase rather involved in the synthesis of the xyloglucan backbone than cellulose. Seems to work simultaneously with xyloglucan 6-xylosyltransferase. Xyloglucan is a noncellulosic polysaccharides of plant cell wall and consists of a glucan backbone substituted by xylose, galactose and fucose. This Oryza sativa subsp. indica (Rice) protein is Probable xyloglucan glycosyltransferase 2 (CSLC2).